A 469-amino-acid polypeptide reads, in one-letter code: 3-isopropylmalate dehydratase large subunit (469 aa).

Positions 347, 410, and 413 each coordinate [4Fe-4S] cluster.

It belongs to the aconitase/IPM isomerase family. LeuC type 1 subfamily. As to quaternary structure, heterodimer of LeuC and LeuD. [4Fe-4S] cluster serves as cofactor.

The catalysed reaction is (2R,3S)-3-isopropylmalate = (2S)-2-isopropylmalate. It functions in the pathway amino-acid biosynthesis; L-leucine biosynthesis; L-leucine from 3-methyl-2-oxobutanoate: step 2/4. Its function is as follows. Catalyzes the isomerization between 2-isopropylmalate and 3-isopropylmalate, via the formation of 2-isopropylmaleate. This Burkholderia thailandensis (strain ATCC 700388 / DSM 13276 / CCUG 48851 / CIP 106301 / E264) protein is 3-isopropylmalate dehydratase large subunit.